We begin with the raw amino-acid sequence, 390 residues long: Coenzyme A biosynthesis bifunctional protein CoaBC (390 aa).

The phosphopantothenoylcysteine decarboxylase stretch occupies residues 1–188 (MDKNKHILIG…NQKDYLKNKK (188 aa)). C156 serves as the catalytic Proton donor. A phosphopantothenate--cysteine ligase region spans residues 189-390 (ILITASRTEE…VAKEILKILY (202 aa)). CTP is bound by residues D277, K287, 304–307 (PDII), F323, K338, and K342.

In the N-terminal section; belongs to the HFCD (homo-oligomeric flavin containing Cys decarboxylase) superfamily. This sequence in the C-terminal section; belongs to the PPC synthetase family. It depends on Mg(2+) as a cofactor. The cofactor is FMN.

The enzyme catalyses N-[(R)-4-phosphopantothenoyl]-L-cysteine + H(+) = (R)-4'-phosphopantetheine + CO2. The catalysed reaction is (R)-4'-phosphopantothenate + L-cysteine + CTP = N-[(R)-4-phosphopantothenoyl]-L-cysteine + CMP + diphosphate + H(+). It functions in the pathway cofactor biosynthesis; coenzyme A biosynthesis; CoA from (R)-pantothenate: step 2/5. Its pathway is cofactor biosynthesis; coenzyme A biosynthesis; CoA from (R)-pantothenate: step 3/5. Catalyzes two sequential steps in the biosynthesis of coenzyme A. In the first step cysteine is conjugated to 4'-phosphopantothenate to form 4-phosphopantothenoylcysteine. In the second step the latter compound is decarboxylated to form 4'-phosphopantotheine. The polypeptide is Coenzyme A biosynthesis bifunctional protein CoaBC (Borreliella burgdorferi (strain ATCC 35210 / DSM 4680 / CIP 102532 / B31) (Borrelia burgdorferi)).